The following is a 269-amino-acid chain: MIKNTKKSQKNKILTLEDVSISYGTFEAVRNVFCNFKSGDITSLIGPSGCGKSTVLRALNRMNDLIPNCSLRGTVLFDGTNIYDKRVDPVEVRRRIGMVFQQPNPFPKSIYENIAFGARINGFVGDMDELVESSLRKAAVWSECKDKLNDSGYSLSGGQQQRLCIARTIAIEPEIILMDEPCSALDPISTLKIEETMHELKKNYTIIIVTHNMQQALRVSDMTAFFNAVEYEEGDGGKVGYLAEFDSTKKIFSSPKEKTTQEYISGKFG.

One can recognise an ABC transporter domain in the interval leucine 14–serine 253. Position 46 to 53 (glycine 46 to serine 53) interacts with ATP.

The protein belongs to the ABC transporter superfamily. Phosphate importer (TC 3.A.1.7) family. In terms of assembly, the complex is composed of two ATP-binding proteins (PstB), two transmembrane proteins (PstC and PstA) and a solute-binding protein (PstS).

The protein localises to the cell inner membrane. It carries out the reaction phosphate(out) + ATP + H2O = ADP + 2 phosphate(in) + H(+). Part of the ABC transporter complex PstSACB involved in phosphate import. Responsible for energy coupling to the transport system. The protein is Phosphate import ATP-binding protein PstB of Prochlorococcus marinus subsp. pastoris (strain CCMP1986 / NIES-2087 / MED4).